Consider the following 369-residue polypeptide: Putative 2-aminoethylphosphonate import ATP-binding protein PhnT (369 aa).

The region spanning 19–250 is the ABC transporter domain; the sequence is IVLDSLRVAY…PPNRFAAEFL (232 aa). Position 51–58 (51–58) interacts with ATP; that stretch reads GPSGSGKT.

It belongs to the ABC transporter superfamily. 2-aminoethylphosphonate importer (TC 3.A.1.11.5) family.

The protein resides in the cell inner membrane. In terms of biological role, probably part of the PhnSTUV complex (TC 3.A.1.11.5) involved in 2-aminoethylphosphonate import. Probably responsible for energy coupling to the transport system. This Salmonella typhi protein is Putative 2-aminoethylphosphonate import ATP-binding protein PhnT (phnT).